The primary structure comprises 136 residues: MLQPKRTKFRKVHTGRNRGLAKGTEVSFGSFGLKAVGRGRLTARQIEAARRAMTRHIKRQGKIWIRVFPDKPITEKPLEVRQGKGKGNVEYWVAQIQPGKVMYEVDGVPEELAREAFRLAARKLPFKTTFVTKQVM.

The protein belongs to the universal ribosomal protein uL16 family. In terms of assembly, part of the 50S ribosomal subunit.

Binds 23S rRNA and is also seen to make contacts with the A and possibly P site tRNAs. This chain is Large ribosomal subunit protein uL16, found in Vibrio vulnificus (strain YJ016).